The following is a 174-amino-acid chain: Peptidyl-prolyl cis-trans isomerase D, mitochondrial (174 aa).

Residues Phe-10 to Gln-173 form the PPIase cyclophilin-type domain.

It belongs to the cyclophilin-type PPIase family. PPIase D subfamily.

It is found in the mitochondrion. The enzyme catalyses [protein]-peptidylproline (omega=180) = [protein]-peptidylproline (omega=0). Its activity is regulated as follows. Binds cyclosporin A (CsA). CsA mediates some of its effects via an inhibitory action on PPIase. PPIases accelerate the folding of proteins. It catalyzes the cis-trans isomerization of proline imidic peptide bonds in oligopeptides. The chain is Peptidyl-prolyl cis-trans isomerase D, mitochondrial (cypD) from Dictyostelium discoideum (Social amoeba).